We begin with the raw amino-acid sequence, 88 residues long: Small ribosomal subunit protein uS15 (88 aa).

It belongs to the universal ribosomal protein uS15 family. As to quaternary structure, part of the 30S ribosomal subunit. Forms a bridge to the 50S subunit in the 70S ribosome, contacting the 23S rRNA.

Functionally, one of the primary rRNA binding proteins, it binds directly to 16S rRNA where it helps nucleate assembly of the platform of the 30S subunit by binding and bridging several RNA helices of the 16S rRNA. In terms of biological role, forms an intersubunit bridge (bridge B4) with the 23S rRNA of the 50S subunit in the ribosome. The chain is Small ribosomal subunit protein uS15 from Acidovorax sp. (strain JS42).